Consider the following 196-residue polypeptide: Ribonuclease HII (196 aa).

Residues Lys9–Glu196 form the RNase H type-2 domain. Residues Asp15, Glu16, and Asp107 each coordinate a divalent metal cation.

It belongs to the RNase HII family. Mn(2+) is required as a cofactor. It depends on Mg(2+) as a cofactor.

Its subcellular location is the cytoplasm. The enzyme catalyses Endonucleolytic cleavage to 5'-phosphomonoester.. Functionally, endonuclease that specifically degrades the RNA of RNA-DNA hybrids. This chain is Ribonuclease HII, found in Aeromonas salmonicida (strain A449).